Here is a 525-residue protein sequence, read N- to C-terminus: MTQQAANALPPVARTYQVRTYGCQMNVHDSERLAGLLEDAGYRRAADGADADVVVFNTCAVRENADNKLYGNLSHLAPRKRSEPQMQIAVGGCLAQKDRDAVLRRAPWVDVVFGTHNIGSLPTLLERARHNRAAQVEIAEALQEFPSTLPAARESAYAGWVSISVGCNNTCTFCIVPSLRGKEVDRRPGDVLAEIQTLVDQGVLEVTLLGQNVNAYGVSFAADERLREDPRMWQSVPRNRGAFAELLRACGRIDGLERVRFTSPHPAEFTDDVIEAMAETPNVCPALHMPLQSGSDRILRAMRRSYRAEKYLGIIDRVRAAIPDAAITTDLIVGFPGETEEDFQATLDVVAASRFSSAFTFQYSKRPGTPAADMPGQLPKAVVSERYQRLIELQERISLEENQAQVGRTLELLVATGEGRKDAATARLSGRARDGRLVHFAPGAAADEPLARRAFDQVRPGDVVTTTVTGAAPHHLIADGALLTHRRTRAGDAHAAGLRPRTGVGLGIPGVGAPAPAPVTTGCAL.

The region spanning Arg-14–His-130 is the MTTase N-terminal domain. 6 residues coordinate [4Fe-4S] cluster: Cys-23, Cys-59, Cys-93, Cys-167, Cys-171, and Cys-174. A Radical SAM core domain is found at Arg-153–Glu-400. Residues Gln-403–Leu-482 form the TRAM domain.

It belongs to the methylthiotransferase family. MiaB subfamily. As to quaternary structure, monomer. Requires [4Fe-4S] cluster as cofactor.

It localises to the cytoplasm. It carries out the reaction N(6)-dimethylallyladenosine(37) in tRNA + (sulfur carrier)-SH + AH2 + 2 S-adenosyl-L-methionine = 2-methylsulfanyl-N(6)-dimethylallyladenosine(37) in tRNA + (sulfur carrier)-H + 5'-deoxyadenosine + L-methionine + A + S-adenosyl-L-homocysteine + 2 H(+). Its function is as follows. Catalyzes the methylthiolation of N6-(dimethylallyl)adenosine (i(6)A), leading to the formation of 2-methylthio-N6-(dimethylallyl)adenosine (ms(2)i(6)A) at position 37 in tRNAs that read codons beginning with uridine. This Mycobacterium sp. (strain MCS) protein is tRNA-2-methylthio-N(6)-dimethylallyladenosine synthase.